Reading from the N-terminus, the 136-residue chain is ATP synthase epsilon chain 2 (136 aa).

It belongs to the ATPase epsilon chain family. As to quaternary structure, F-type ATPases have 2 components, CF(1) - the catalytic core - and CF(0) - the membrane proton channel. CF(1) has five subunits: alpha(3), beta(3), gamma(1), delta(1), epsilon(1). CF(0) has three main subunits: a, b and c.

Its subcellular location is the cell inner membrane. Functionally, produces ATP from ADP in the presence of a proton gradient across the membrane. The protein is ATP synthase epsilon chain 2 of Nitrobacter hamburgensis (strain DSM 10229 / NCIMB 13809 / X14).